The chain runs to 1248 residues: MDAKARNCLLQHREALEKDIKTSYIMDHMISDGFLTISEEEKVRNEPTQQQRAAMLIKMILKKDNDSYVSFYNALLHEGYKDLAALLHDGIPVVSSSSGKDSVSGITSYVRTVLCEGGVPQRPVVFVTRKKLVNAIQQKLSKLKGEPGWVTIHGMAGCGKSVLAAEAVRDHSLLEGCFPGGVHWVSVGKQDKSGLLMKLQNLCTRLDQDESFSQRLPLNIEEAKDRLRILMLRKHPRSLLILDDVWDSWVLKAFDSQCQILLTTRDKSVTDSVMGPKYVVPVESSLGKEKGLEILSLFVNMKKADLPEQAHSIIKECKGSPLVVSLIGALLRDFPNRWEYYLKQLQNKQFKRIRKSSSYDYEALDEAMSISVEMLREDIKDYYTDLSILQKDVKVPTKVLCILWDMETEEVEDILQEFVNKSLLFCDRNGKSFRYYLHDLQVDFLTEKNCSQLQDLHKKIITQFQRYHQPHTLSPDQEDCMYWYNFLAYHMASAKMHKELCALMFSLDWIKAKTELVGPAHLIHEFVEYRHILDEKDCAVSENFQEFLSLNGHLLGRQPFPNIVQLGLCEPETSEVYQQAKLQAKQEVDNGMLYLEWINKKNITNLSRLVVRPHTDAVYHACFSEDGQRIASCGADKTLQVFKAETGEKLLEIKAHEDEVLCCAFSTDDRFIATCSVDKKVKIWNSMTGELVHTYDEHSEQVNCCHFTNSSHHLLLATGSSDCFLKLWDLNQKECRNTMFGHTNSVNHCRFSPDDKLLASCSADGTLKLWDATSANERKSINVKQFFLNLEDPQEDMEVIVKCCSWSADGARIMVAAKNKIFLFDIHTSGLLGEIHTGHHSTIQYCDFSPQNHLAVVALSQYCVELWNTDSRSKVADCRGHLSWVHGVMFSPDGSSFLTSSDDQTIRLWETKKVCKNSAVMLKQEVDVVFQENEVMVLAVDHIRRLQLINGRTGQIDYLTEAQVSCCCLSPHLQYIAFGDENGAIEILELVNNRIFQSRFQHKKTVWHIQFTADEKTLISSSDDAEIQVWNWQLDKCIFLRGHQETVKDFRLLKNSRLLSWSFDGTVKVWNIITGNKEKDFVCHQGTVLSCDISHDATKFSSTSADKTAKIWSFDLLLPLHELRGHNGCVRCSAFSVDSTLLATGDDNGEIRIWNVSNGELLHLCAPLSEEGAATHGGWVTDLCFSPDGKMLISAGGYIKWWNVVTGESSQTFYTNGTNLKKIHVSPDFKTYVTVDNLGILYILQTLE.

Residues 1–90 enclose the CARD domain; it reads MDAKARNCLL…KDLAALLHDG (90 aa). An NB-ARC domain is found at 104–415; that stretch reads SGITSYVRTV…METEEVEDIL (312 aa). Residues 154 to 161 and arginine 265 each bind ATP; that span reads GMAGCGKS. The WD 1-1 repeat unit spans residues 613–652; the sequence is PHTDAVYHACFSEDGQRIASCGADKTLQVFKAETGEKLLE. A WD 1-2 repeat occupies 655–694; the sequence is AHEDEVLCCAFSTDDRFIATCSVDKKVKIWNSMTGELVHT. A WD 1-3 repeat occupies 697 to 738; the sequence is EHSEQVNCCHFTNSSHHLLLATGSSDCFLKLWDLNQKECRNT. One copy of the WD 1-4 repeat lies at 741 to 780; sequence GHTNSVNHCRFSPDDKLLASCSADGTLKLWDATSANERKS. One copy of the WD 1-5 repeat lies at 796–836; sequence DMEVIVKCCSWSADGARIMVAAKNKIFLFDIHTSGLLGEIH. The stretch at 838-877 is one WD 1-6 repeat; it reads GHHSTIQYCDFSPQNHLAVVALSQYCVELWNTDSRSKVAD. The stretch at 880-910 is one WD 1-7 repeat; the sequence is GHLSWVHGVMFSPDGSSFLTSSDDQTIRLWE. Residues 910–921 are interpropeller linker; it reads ETKKVCKNSAVM. One copy of the WD 2-1 repeat lies at 922–958; sequence LKQEVDVVFQENEVMVLAVDHIRRLQLINGRTGQIDY. The stretch at 959–998 is one WD 2-2 repeat; it reads LTEAQVSCCCLSPHLQYIAFGDENGAIEILELVNNRIFQS. The stretch at 1001 to 1040 is one WD 2-3 repeat; sequence QHKKTVWHIQFTADEKTLISSSDDAEIQVWNWQLDKCIFL. The WD 2-4 repeat unit spans residues 1042–1080; sequence GHQETVKDFRLLKNSRLLSWSFDGTVKVWNIITGNKEKD. Residues 1083–1122 form a WD 2-5 repeat; the sequence is CHQGTVLSCDISHDATKFSSTSADKTAKIWSFDLLLPLHE. Residues 1125–1164 form a WD 2-6 repeat; the sequence is GHNGCVRCSAFSVDSTLLATGDDNGEIRIWNVSNGELLHL. One copy of the WD 2-7 repeat lies at 1175–1212; that stretch reads THGGWVTDLCFSPDGKMLISAGGYIKWWNVVTGESSQT. One copy of the WD 2-8 repeat lies at 1213-1248; sequence FYTNGTNLKKIHVSPDFKTYVTVDNLGILYILQTLE.

As to quaternary structure, monomer. Oligomerizes to a heptameric ring, known as the apoptosome, upon binding of cytochrome c and dATP. Oligomeric Apaf-1 and pro-caspase-9 bind to each other via their respective NH2-terminal CARD domains and consecutively mature caspase-9 is released from the complex. Pro-caspase-3 is recruited into the Apaf-1-pro-caspase-9 complex via interaction with pro-caspase-9. Interacts with APIP. Interacts (via CARD and NACHT domains) with NAIP/BIRC1 (via NACHT domain). Interacts with CIAO2A. Ubiquitous. Highest levels of expression in adult spleen and peripheral blood leukocytes, and in fetal brain, kidney and lung. Isoform 1 is expressed in heart, kidney and liver.

Its subcellular location is the cytoplasm. Oligomeric Apaf-1 mediates the cytochrome c-dependent autocatalytic activation of pro-caspase-9 (Apaf-3), leading to the activation of caspase-3 and apoptosis. This activation requires ATP. Isoform 6 is less effective in inducing apoptosis. This is Apoptotic protease-activating factor 1 from Homo sapiens (Human).